The primary structure comprises 539 residues: Lysosomal cobalamin transport escort protein LMBD1 (539 aa).

The Extracellular portion of the chain corresponds to 1–7; the sequence is MATGSTE. The helical transmembrane segment at 8–28 threads the bilayer; it reads LLIGWCIFGVLLLAILAFCWV. The Cytoplasmic segment spans residues 29–47; sequence YVRKYQSHQESEVISTITA. The helical transmembrane segment at 48–68 threads the bilayer; it reads ISSLAIALITSALLPVDIFLV. Over 69 to 98 the chain is Extracellular; that stretch reads SFMKNHNGTFKDWAESNTTRLQIENTVLIG. 2 N-linked (GlcNAc...) asparagine glycosylation sites follow: Asn75 and Asn85. The chain crosses the membrane as a helical span at residues 99 to 119; that stretch reads YYTLYSIILFCVFLWIPFVYF. Over 120-142 the chain is Cytoplasmic; sequence YYEEKDDTDGSQCSQIANAFKYT. A helical membrane pass occupies residues 143–163; the sequence is SGFILVCSCLLLIGAFAPLDI. Residues 164 to 186 lie on the Extracellular side of the membrane; the sequence is HTNKNSTDLDKIKLLFLELGSSN. Asn168 carries N-linked (GlcNAc...) asparagine glycosylation. The helical transmembrane segment at 187 to 207 threads the bilayer; sequence GLAALSFSISSLTLIGMLAAI. Residues 208-303 are Cytoplasmic-facing; it reads TYTAYGMSAL…KCCIVIRPFK (96 aa). Residues 304–324 traverse the membrane as a helical segment; the sequence is IIWGILFILVALLFIVSLFLS. Topologically, residues 325–362 are extracellular; it reads NLDKALHSAGIDSGFIIFGTNLTNPLNMLLPVLQTVFP. Asn345 is a glycosylation site (N-linked (GlcNAc...) asparagine). The helical transmembrane segment at 363–383 threads the bilayer; sequence LDYIFITIITMYFIFTSMAGI. The Cytoplasmic portion of the chain corresponds to 384–406; the sequence is RNMGIWFFWIRLYKIRRRRTRPQ. Residues 407–427 traverse the membrane as a helical segment; that stretch reads ALLFLCMILLLIVLHTSYMIY. The Extracellular portion of the chain corresponds to 428 to 484; it reads SLAPQYVMYGSQKYLWENNSTQETAIGNSSASVLKDCDASAPEDQCTVTRTYLFLHK. N-linked (GlcNAc...) asparagine glycans are attached at residues Asn445, Asn446, and Asn455. A helical membrane pass occupies residues 485-505; that stretch reads FWFFSSIYYFGNWAFIVVFVI. Topologically, residues 506–539 are cytoplasmic; sequence GLIVSCCKGKKSVIEGEVEDDDSDLSDDEEHPYA.

It belongs to the LIMR family. LMBRD1 subfamily.

The protein localises to the endoplasmic reticulum membrane. Its subcellular location is the lysosome membrane. It is found in the cell membrane. Lysosomal membrane chaperone required to export cobalamin (vitamin B12) from the lysosome to the cytosol, allowing its conversion to cofactors. Targets ABCD4 transporter from the endoplasmic reticulum to the lysosome. Then forms a complex with lysosomal ABCD4 and cytoplasmic MMACHC to transport cobalamin across the lysosomal membrane. May play a role in mediating and regulating the internalization of the insulin receptor. The protein is Lysosomal cobalamin transport escort protein LMBD1 (lmbrd1) of Xenopus tropicalis (Western clawed frog).